The sequence spans 181 residues: MALRPAKIDRYVDKPAYTRREYIRGAPGPKITIFDMGNPAGDFEFEVSLHTAEPVQIRQNALEAARQQVNRYLQKNVGRSNYHFKIRVYPFQVLRENPMATGRKADRYGNGMRRPFGKPIGLAARLKKDQKILSIRVNRQHLKFAIEGARRAAMKFPCKCYYRIYDKEGNDVTTKILSQSL.

Belongs to the universal ribosomal protein uL16 family. Part of the 50S ribosomal subunit.

The sequence is that of Large ribosomal subunit protein uL16 from Pyrococcus furiosus (strain ATCC 43587 / DSM 3638 / JCM 8422 / Vc1).